A 173-amino-acid chain; its full sequence is Ribosome maturation factor RimP (173 aa).

It belongs to the RimP family.

It localises to the cytoplasm. In terms of biological role, required for maturation of 30S ribosomal subunits. This chain is Ribosome maturation factor RimP, found in Chlorobium phaeobacteroides (strain DSM 266 / SMG 266 / 2430).